A 133-amino-acid polypeptide reads, in one-letter code: Protein OPG104 (133 aa).

Residues 1-111 are Virion surface-facing; the sequence is MTDEQIYAFC…RYLNQEIRYP (111 aa). Residues 112 to 132 traverse the membrane as a helical; Signal-anchor segment; the sequence is IIDIKWLPIGLLALAILILAF.

Belongs to the orthopoxvirus OPG104 family. Part of a stable entry-fusion complex (EFC) which is at least composed of proteins OPG143, OPG147, OPG155, OPG086, OPG094, OPG107, OPG104, and OPG099. Formation of the viral membrane is necessary for the assembly of the complex.

It localises to the virion membrane. Envelope protein part of the entry-fusion complex responsible for the virus membrane fusion with host cell membrane during virus entry. Also plays a role in cell-cell fusion (syncytium formation). In Variola virus (isolate Human/India/Ind3/1967) (VARV), this protein is Protein OPG104 (OPG104).